Reading from the N-terminus, the 361-residue chain is Carbamoyl phosphate synthase small chain (361 aa).

The CPSase stretch occupies residues 1-173; sequence MRAALALEDG…SVREEYRFSD (173 aa). Residues serine 45, glycine 225, and glycine 227 each coordinate L-glutamine. A Glutamine amidotransferase type-1 domain is found at 177–361; that stretch reads EIVVIDCGVK…DEFLAMCREH (185 aa). Catalysis depends on cysteine 252, which acts as the Nucleophile. Positions 253, 256, 294, 296, and 297 each coordinate L-glutamine. Catalysis depends on residues histidine 337 and glutamate 339.

Belongs to the CarA family. As to quaternary structure, composed of two chains; the small (or glutamine) chain promotes the hydrolysis of glutamine to ammonia, which is used by the large (or ammonia) chain to synthesize carbamoyl phosphate. Tetramer of heterodimers (alpha,beta)4.

It catalyses the reaction hydrogencarbonate + L-glutamine + 2 ATP + H2O = carbamoyl phosphate + L-glutamate + 2 ADP + phosphate + 2 H(+). The enzyme catalyses L-glutamine + H2O = L-glutamate + NH4(+). Its pathway is amino-acid biosynthesis; L-arginine biosynthesis; carbamoyl phosphate from bicarbonate: step 1/1. It participates in pyrimidine metabolism; UMP biosynthesis via de novo pathway; (S)-dihydroorotate from bicarbonate: step 1/3. Small subunit of the glutamine-dependent carbamoyl phosphate synthetase (CPSase). CPSase catalyzes the formation of carbamoyl phosphate from the ammonia moiety of glutamine, carbonate, and phosphate donated by ATP, constituting the first step of 2 biosynthetic pathways, one leading to arginine and/or urea and the other to pyrimidine nucleotides. The small subunit (glutamine amidotransferase) binds and cleaves glutamine to supply the large subunit with the substrate ammonia. The chain is Carbamoyl phosphate synthase small chain from Methanopyrus kandleri (strain AV19 / DSM 6324 / JCM 9639 / NBRC 100938).